The sequence spans 187 residues: MTHILFAVLVLALLALAFGIILGFAAVKFHVEADPIVDQLDALLPQTQCGQCGYPGCKPYAEALANGDQINKCVPGGDATMRKIADLMGVEPQPLGGAEAAAPIKKVAFIHEDQCIGCTKCIQACPVDAIVGATKAMHTVIADECTGCDLCVDPCPTDCIEMIPVPTTVDNWKWDLANVAIPVKIVE.

The segment at Met1–Ala26 is hydrophobic. The 4Fe-4S domain maps to Glu32–Val90. [4Fe-4S] cluster contacts are provided by Cys49, Cys52, Cys57, Cys73, Cys115, Cys118, Cys121, Cys125, Cys145, Cys148, Cys151, and Cys155. 4Fe-4S ferredoxin-type domains are found at residues Lys106–Lys135 and Ala136–Val165.

Belongs to the 4Fe4S bacterial-type ferredoxin family. RnfB subfamily. As to quaternary structure, the complex is composed of six subunits: RnfA, RnfB, RnfC, RnfD, RnfE and RnfG. [4Fe-4S] cluster is required as a cofactor.

It localises to the cell inner membrane. Part of a membrane-bound complex that couples electron transfer with translocation of ions across the membrane. The polypeptide is Ion-translocating oxidoreductase complex subunit B (Aeromonas hydrophila subsp. hydrophila (strain ATCC 7966 / DSM 30187 / BCRC 13018 / CCUG 14551 / JCM 1027 / KCTC 2358 / NCIMB 9240 / NCTC 8049)).